Here is a 397-residue protein sequence, read N- to C-terminus: uncharacterized protein (397 aa).

4 helical membrane passes run 62 to 79 (VLLFGILIFSIFVALIAI), 92 to 109 (WYGLLAFGVLTSLELVVT), 135 to 154 (VVFLPLICVYSLSILYSTLS), and 167 to 189 (AFLKTMLFTLLICSFILNFFPGI).

The protein resides in the cell membrane. This is an uncharacterized protein from Archaeoglobus fulgidus (strain ATCC 49558 / DSM 4304 / JCM 9628 / NBRC 100126 / VC-16).